A 547-amino-acid chain; its full sequence is Methionine--tRNA ligase (547 aa).

The 'HIGH' region motif lies at 13–23; the sequence is PYANGPLHIGH. Residues cysteine 145, cysteine 148, cysteine 158, and cysteine 161 each contribute to the Zn(2+) site. The short motif at 334-338 is the 'KMSKS' region element; the sequence is QFSKS. Position 337 (lysine 337) interacts with ATP.

The protein belongs to the class-I aminoacyl-tRNA synthetase family. MetG type 1 subfamily. Requires Zn(2+) as cofactor.

It localises to the cytoplasm. It carries out the reaction tRNA(Met) + L-methionine + ATP = L-methionyl-tRNA(Met) + AMP + diphosphate. Functionally, is required not only for elongation of protein synthesis but also for the initiation of all mRNA translation through initiator tRNA(fMet) aminoacylation. This Thermoplasma acidophilum (strain ATCC 25905 / DSM 1728 / JCM 9062 / NBRC 15155 / AMRC-C165) protein is Methionine--tRNA ligase.